The sequence spans 198 residues: Recombination protein RecR (198 aa).

A C4-type zinc finger spans residues cysteine 57 to cysteine 72. The Toprim domain occupies serine 80–proline 175.

This sequence belongs to the RecR family.

May play a role in DNA repair. It seems to be involved in an RecBC-independent recombinational process of DNA repair. It may act with RecF and RecO. The sequence is that of Recombination protein RecR from Bacillus thuringiensis (strain Al Hakam).